Consider the following 336-residue polypeptide: Inositol 2-dehydrogenase (336 aa).

It belongs to the Gfo/Idh/MocA family. As to quaternary structure, homotetramer.

It catalyses the reaction myo-inositol + NAD(+) = scyllo-inosose + NADH + H(+). Its function is as follows. Involved in the oxidation of myo-inositol (MI) to 2-keto-myo-inositol (2KMI or 2-inosose). The protein is Inositol 2-dehydrogenase of Pseudomonas fluorescens (strain ATCC BAA-477 / NRRL B-23932 / Pf-5).